The chain runs to 247 residues: Carboxy-S-adenosyl-L-methionine synthase (247 aa).

S-adenosyl-L-methionine contacts are provided by residues tyrosine 40, 65 to 67 (GAS), 90 to 91 (DN), 122 to 123 (DI), asparagine 137, and arginine 204.

The protein belongs to the class I-like SAM-binding methyltransferase superfamily. Cx-SAM synthase family. In terms of assembly, homodimer.

It carries out the reaction prephenate + S-adenosyl-L-methionine = carboxy-S-adenosyl-L-methionine + 3-phenylpyruvate + H2O. Functionally, catalyzes the conversion of S-adenosyl-L-methionine (SAM) to carboxy-S-adenosyl-L-methionine (Cx-SAM). This is Carboxy-S-adenosyl-L-methionine synthase from Pseudomonas fluorescens (strain Pf0-1).